Here is a 96-residue protein sequence, read N- to C-terminus: UPF0102 protein ML1607 (96 aa).

This sequence belongs to the UPF0102 family.

This chain is UPF0102 protein ML1607, found in Mycobacterium leprae (strain TN).